Reading from the N-terminus, the 149-residue chain is Cytochrome c-type biogenesis protein CcmE (149 aa).

Residues 1 to 8 lie on the Cytoplasmic side of the membrane; it reads MNPKRKQR. The helical; Signal-anchor for type II membrane protein transmembrane segment at 9–29 threads the bilayer; that stretch reads LIIVSFLVIGVSATVGLIMAA. The Periplasmic segment spans residues 30–149; the sequence is LSSNVNHFYN…AQDAAPAQTY (120 aa). 2 residues coordinate heme: H124 and Y128.

This sequence belongs to the CcmE/CycJ family.

Its subcellular location is the cell inner membrane. Functionally, heme chaperone required for the biogenesis of c-type cytochromes. Transiently binds heme delivered by CcmC and transfers the heme to apo-cytochromes in a process facilitated by CcmF and CcmH. This chain is Cytochrome c-type biogenesis protein CcmE, found in Hahella chejuensis (strain KCTC 2396).